Here is a 722-residue protein sequence, read N- to C-terminus: Protein Aster-A (722 aa).

Residues 1 to 62 (MFDTTPHSGR…KSGVSGTLST (62 aa)) form a disordered region. The segment covering 8–18 (SGRSSPSSSPS) has biased composition (low complexity). The GRAM domain occupies 93 to 160 (EDFRKLFSKL…KEVTCLKKEK (68 aa)). The interval 256-336 (ISPSGAADHS…DGPTSSLGPL (81 aa)) is disordered. Phosphoserine occurs at positions 265, 269, 273, and 417. One can recognise a VASt domain in the interval 369–540 (SGRLLINSVF…ELAKAEKLSL (172 aa)). The segment at 561–600 (LSWRGHRDGPQHPDPDPCTQTSMHTSGSLSSRFSEPSVDQ) is disordered. A compositionally biased stretch (basic and acidic residues) spans 565–575 (GHRDGPQHPDP). Residues 578 to 594 (CTQTSMHTSGSLSSRFS) are compositionally biased toward polar residues. A helical membrane pass occupies residues 609-629 (ALVLISIVLIVLIALNALLFY).

As to expression, highly expressed in the brain.

The protein localises to the endoplasmic reticulum membrane. The protein resides in the cell membrane. It localises to the cytoplasmic vesicle. It is found in the autophagosome. Functionally, cholesterol transporter that mediates non-vesicular transport of cholesterol from the plasma membrane (PM) to the endoplasmic reticulum (ER). Contains unique domains for binding cholesterol and the PM, thereby serving as a molecular bridge for the transfer of cholesterol from the PM to the ER. Plays a crucial role in cholesterol homeostasis and has the unique ability to localize to the PM based on the level of membrane cholesterol. In lipid-poor conditions localizes to the ER membrane and in response to excess cholesterol in the PM is recruited to the endoplasmic reticulum-plasma membrane contact sites (EPCS) which is mediated by the GRAM domain. At the EPCS, the sterol-binding VASt/ASTER domain binds to the cholesterol in the PM and facilitates its transfer from the PM to ER. May play a role in tumor progression. Plays a role in autophagy regulation and is required for biogenesis of the autophagosome. This function in autophagy requires its cholesterol-transfer activity. This chain is Protein Aster-A, found in Mus musculus (Mouse).